A 312-amino-acid polypeptide reads, in one-letter code: Porphobilinogen deaminase (312 aa).

At Cys-241 the chain carries S-(dipyrrolylmethanemethyl)cysteine.

The protein belongs to the HMBS family. In terms of assembly, monomer. Dipyrromethane is required as a cofactor.

The catalysed reaction is 4 porphobilinogen + H2O = hydroxymethylbilane + 4 NH4(+). The protein operates within porphyrin-containing compound metabolism; protoporphyrin-IX biosynthesis; coproporphyrinogen-III from 5-aminolevulinate: step 2/4. Its function is as follows. Tetrapolymerization of the monopyrrole PBG into the hydroxymethylbilane pre-uroporphyrinogen in several discrete steps. This Aliarcobacter butzleri (strain RM4018) (Arcobacter butzleri) protein is Porphobilinogen deaminase.